A 289-amino-acid polypeptide reads, in one-letter code: MLLKLGIPKGSLENATIDLFRRAGFQITTSSRSYFPGIDDPEIECMLIRAQEMARYVEDGILDSGLTGRDWIEENEAAIVPVADLIYAKQSFGKVRWVLAVPEASSFRTVHDLEGKIIATELVATTKRYMAKHGVKAKVEFSWGATEVKPPVLADAIVEVTETGSSLRANKLKIIDTVLESNTQLIANKASWEDPEKRRKLEDIRMLLQGAINALGKVGLMLNVHKDNLKAVLGVLPALKRPTISHLSDDEWLAVNTILDESTVRDIIPRLKQAGGEGIVEYPLNKIVL.

The protein belongs to the ATP phosphoribosyltransferase family. Long subfamily. Mg(2+) serves as cofactor.

It localises to the cytoplasm. It carries out the reaction 1-(5-phospho-beta-D-ribosyl)-ATP + diphosphate = 5-phospho-alpha-D-ribose 1-diphosphate + ATP. Its pathway is amino-acid biosynthesis; L-histidine biosynthesis; L-histidine from 5-phospho-alpha-D-ribose 1-diphosphate: step 1/9. Its activity is regulated as follows. Feedback inhibited by histidine. In terms of biological role, catalyzes the condensation of ATP and 5-phosphoribose 1-diphosphate to form N'-(5'-phosphoribosyl)-ATP (PR-ATP). Has a crucial role in the pathway because the rate of histidine biosynthesis seems to be controlled primarily by regulation of HisG enzymatic activity. This chain is ATP phosphoribosyltransferase, found in Solibacter usitatus (strain Ellin6076).